The following is a 267-amino-acid chain: Octanoyltransferase (267 aa).

Residues 1–30 (MPTGKLRQKPPYAAIMTNSPVTPSTETQQP) are disordered. A compositionally biased stretch (polar residues) spans 16–28 (MTNSPVTPSTETQ). The region spanning 77–265 (GTASELVWLV…AFESVFGPRQ (189 aa)) is the BPL/LPL catalytic domain. Substrate contacts are provided by residues 116–123 (RGGEYTYH), 196–198 (AIG), and 209–211 (GIA). The Acyl-thioester intermediate role is filled by cysteine 227.

Belongs to the LipB family.

Its subcellular location is the cytoplasm. The enzyme catalyses octanoyl-[ACP] + L-lysyl-[protein] = N(6)-octanoyl-L-lysyl-[protein] + holo-[ACP] + H(+). The protein operates within protein modification; protein lipoylation via endogenous pathway; protein N(6)-(lipoyl)lysine from octanoyl-[acyl-carrier-protein]: step 1/2. Catalyzes the transfer of endogenously produced octanoic acid from octanoyl-acyl-carrier-protein onto the lipoyl domains of lipoate-dependent enzymes. Lipoyl-ACP can also act as a substrate although octanoyl-ACP is likely to be the physiological substrate. This Brucella abortus biovar 1 (strain 9-941) protein is Octanoyltransferase.